The following is a 392-amino-acid chain: MTATAPITQDVMTLPRKLPEGGPLNIVGLTREELMAALVAAGTPERQARMRMGQVWQWVYHWGVRDFAQMTNLAKDYRALLAEHFAIVLPEVVTRQISADGTRKYLIRIAGGHEVETVYIPEEGRGTLCVSSQVGCTLTCSFCHTGTQKLVRNLTAGEIVGQVMLVRDDLGEWPERGAPKDETRLVSNLVLMGMGEPLYNFENVRNAMKVVMDGEGLSLSRRRITLSTSGVVPEIARTAEEIGCQLAISFHATTDEVRDILVPINKRWNIRTLLDSLRDYPRLSNSERITFEYVMLDGINDSDADARRLVKLISGIPSKINLIPFNEWPGAPYRRSTPERIAAFADIIYKAGYASPIRTPRGEDIMAACGQLKSATERARKSRAQIAAETGL.

The Proton acceptor role is filled by glutamate 116. A Radical SAM core domain is found at 122–364 (EEGRGTLCVS…SPIRTPRGED (243 aa)). An intrachain disulfide couples cysteine 129 to cysteine 369. Residues cysteine 136, cysteine 140, and cysteine 143 each contribute to the [4Fe-4S] cluster site. S-adenosyl-L-methionine-binding positions include 195-196 (GE), serine 227, 249-251 (SFH), and asparagine 326. The active-site S-methylcysteine intermediate is the cysteine 369.

This sequence belongs to the radical SAM superfamily. RlmN family. [4Fe-4S] cluster is required as a cofactor.

The protein resides in the cytoplasm. It carries out the reaction adenosine(2503) in 23S rRNA + 2 reduced [2Fe-2S]-[ferredoxin] + 2 S-adenosyl-L-methionine = 2-methyladenosine(2503) in 23S rRNA + 5'-deoxyadenosine + L-methionine + 2 oxidized [2Fe-2S]-[ferredoxin] + S-adenosyl-L-homocysteine. The catalysed reaction is adenosine(37) in tRNA + 2 reduced [2Fe-2S]-[ferredoxin] + 2 S-adenosyl-L-methionine = 2-methyladenosine(37) in tRNA + 5'-deoxyadenosine + L-methionine + 2 oxidized [2Fe-2S]-[ferredoxin] + S-adenosyl-L-homocysteine. Functionally, specifically methylates position 2 of adenine 2503 in 23S rRNA and position 2 of adenine 37 in tRNAs. m2A2503 modification seems to play a crucial role in the proofreading step occurring at the peptidyl transferase center and thus would serve to optimize ribosomal fidelity. This is Dual-specificity RNA methyltransferase RlmN from Cereibacter sphaeroides (strain ATCC 17025 / ATH 2.4.3) (Rhodobacter sphaeroides).